The sequence spans 438 residues: Transmembrane protein 184C (438 aa).

7 consecutive transmembrane segments (helical) span residues 17 to 37, 48 to 68, 86 to 106, 176 to 196, 212 to 232, 254 to 274, and 287 to 307; these read LAVV…VWEL, AWFI…WVIL, ILWM…YPSI, VLQY…CELL, YLVI…LLFY, VVFV…VGVI, and AVAT…AAIA. Positions 358-438 are disordered; the sequence is PRKKFFPEDQ…EEPSEKPVAS (81 aa). Low complexity-rich tracts occupy residues 374 to 390 and 404 to 413; these read SLLS…ASSV and TVTPQTTPTT. The span at 426–438 shows a compositional bias: basic and acidic residues; sequence GVREEPSEKPVAS.

This sequence belongs to the TMEM184 family.

It localises to the membrane. In terms of biological role, possible tumor suppressor which may play a role in cell growth. The sequence is that of Transmembrane protein 184C (TMEM184C) from Bos taurus (Bovine).